Consider the following 133-residue polypeptide: Large ribosomal subunit protein uL15 (133 aa).

The tract at residues 1-64 (MGLENLKPAK…QPLQRRLPKI (64 aa)) is disordered.

It belongs to the universal ribosomal protein uL15 family. Part of the 50S ribosomal subunit.

Functionally, binds to the 23S rRNA. The polypeptide is Large ribosomal subunit protein uL15 (Helicobacter pylori (strain G27)).